Here is a 380-residue protein sequence, read N- to C-terminus: Deoxyguanosinetriphosphate triphosphohydrolase-like protein (380 aa).

A disordered region spans residues 1 to 28 (MYAPYATMPDRSRGRAVPEEESSFRSPF). The HD domain occupies 62–198 (RLTHSIEVGQ…AALADDIAYN (137 aa)).

Belongs to the dGTPase family. Type 2 subfamily.

The protein is Deoxyguanosinetriphosphate triphosphohydrolase-like protein of Ruegeria sp. (strain TM1040) (Silicibacter sp.).